The primary structure comprises 657 residues: Pyoverdine export ATP-binding/permease protein PvdT (657 aa).

One can recognise an ABC transporter domain in the interval 6-245 (IDLRGIRKSY…RSVNPAALQA (240 aa)). 43–50 (GASGSGKS) provides a ligand contact to ATP. 4 consecutive transmembrane segments (helical) span residues 285–305 (ALTL…LAVG), 539–559 (IAAI…LMTV), 590–610 (LSVV…AALL), and 620–640 (LPAV…FGFM).

It belongs to the ABC transporter superfamily. Macrolide exporter (TC 3.A.1.122) family. Part of the tripartite efflux system PvdRT-OpmQ, which is composed of an inner membrane component with both ATPase and permease domains, PvdT, a periplasmic membrane fusion protein, PvdR, and an outer membrane component, OpmQ.

The protein resides in the cell inner membrane. Functionally, part of the tripartite efflux system PvdRT-OpmQ required for the secretion into the extracellular milieu of the siderophore pyoverdine (PVD), which is involved in iron acquisition. This subunit binds PVD and drives its secretion by hydrolyzing ATP. The system is responsible for export of newly synthesized PVD after the final steps of biosynthesis have taken place in the periplasm. It is also responsible for recycling of PVD after internalization of ferri-PVD into the periplasm by the outer-membrane receptor FpvA and release of iron from PVD, thus making PVD available for new cycles of iron uptake. The polypeptide is Pyoverdine export ATP-binding/permease protein PvdT (Pseudomonas syringae pv. syringae (strain B728a)).